The sequence spans 321 residues: G-protein coupled receptor homolog ECRF3 (321 aa).

Topologically, residues 1 to 34 (MEVKLDFSSEDFSNYSYNYSGDIYYGDVAPCVVN) are extracellular. N-linked (GlcNAc...) asparagine; by host glycosylation is found at asparagine 14 and asparagine 18. The chain crosses the membrane as a helical span at residues 35–51 (FLISESALAFIYVLMFL). Topologically, residues 52 to 76 (CNAIGNSLVLRTFLKYRAQAQSFDY) are cytoplasmic. The helical transmembrane segment at 77-93 (LMMGFCLNSLFLAGYLL) threads the bilayer. Topologically, residues 94–124 (MRLLRMFEIFMNTELCKLEAFFLNLSIYWSP) are extracellular. An N-linked (GlcNAc...) asparagine; by host glycan is attached at asparagine 117. A helical membrane pass occupies residues 125–141 (FILVFISVLRCLLIFCA). The Cytoplasmic portion of the chain corresponds to 142–149 (TRLWVKKT). A helical transmembrane segment spans residues 150 to 166 (LIGQVFLCCSFVLACFG). Over 167–196 (ALPHVMVTSYYEPSSCIEEDGVLTEQLRTK) the chain is Extracellular. The helical transmembrane segment at 197–215 (LNTFHTWYSFAGPLFITVI) threads the bilayer. At 216–234 (CYSMSCYKLFKTKLSKRAE) the chain is on the cytoplasmic side. Residues 235-251 (VVTIITMTTLLFIVFCI) traverse the membrane as a helical segment. Topologically, residues 252–286 (PYYIMESIDTLLRVGVIEETCAKRSAIVYGIQCTY) are extracellular. Residues 287 to 303 (MLLVLYYCMLPLMFAMF) form a helical membrane-spanning segment. Residues 304 to 321 (GSLFRQRMAAWCKTICHC) are Cytoplasmic-facing.

It belongs to the G-protein coupled receptor 1 family.

It is found in the host cell membrane. Its function is as follows. May be highly relevant to the process of cellular transformation and rapid T-cell proliferation effected by HVS during latent infections of T-cells in susceptible hosts. The sequence is that of G-protein coupled receptor homolog ECRF3 (74) from Saimiri sciureus (Common squirrel monkey).